The following is a 367-amino-acid chain: Tetraacyldisaccharide 4'-kinase (367 aa).

An ATP-binding site is contributed by 68–75 (VLGGSGKT).

It belongs to the LpxK family.

It carries out the reaction a lipid A disaccharide + ATP = a lipid IVA + ADP + H(+). It participates in glycolipid biosynthesis; lipid IV(A) biosynthesis; lipid IV(A) from (3R)-3-hydroxytetradecanoyl-[acyl-carrier-protein] and UDP-N-acetyl-alpha-D-glucosamine: step 6/6. Transfers the gamma-phosphate of ATP to the 4'-position of a tetraacyldisaccharide 1-phosphate intermediate (termed DS-1-P) to form tetraacyldisaccharide 1,4'-bis-phosphate (lipid IVA). This is Tetraacyldisaccharide 4'-kinase from Chlamydia caviae (strain ATCC VR-813 / DSM 19441 / 03DC25 / GPIC) (Chlamydophila caviae).